The chain runs to 515 residues: Fatty acyl-CoA reductase 1 (515 aa).

The Cytoplasmic segment spans residues 1 to 465 (MVSIPEYYEG…ARKHLNKLRN (465 aa)). The interval 451-507 (SGLPAARKHLNKLRNIRYGFNTILVILIWRIFIARSQMARNIWYFVVSLCYKFLSYF) is necessary and sufficient for PEX19-mediated localization into peroxisome membrane. The chain crosses the membrane as a helical span at residues 466-483 (IRYGFNTILVILIWRIFI). The Peroxisomal segment spans residues 484 to 515 (ARSQMARNIWYFVVSLCYKFLSYFRASSTMRY).

It belongs to the fatty acyl-CoA reductase family. In terms of assembly, interacts with PEX19; PEX19 mediates the targeting of FAR1 to peroxisomes.

Its subcellular location is the peroxisome membrane. It carries out the reaction a long-chain fatty acyl-CoA + 2 NADPH + 2 H(+) = a long-chain primary fatty alcohol + 2 NADP(+) + CoA. It catalyses the reaction hexadecanoyl-CoA + 2 NADPH + 2 H(+) = hexadecan-1-ol + 2 NADP(+) + CoA. The catalysed reaction is octadecanoyl-CoA + 2 NADPH + 2 H(+) = octadecan-1-ol + 2 NADP(+) + CoA. The enzyme catalyses (9Z)-octadecenoyl-CoA + 2 NADPH + 2 H(+) = (9Z)-octadecen-1-ol + 2 NADP(+) + CoA. It carries out the reaction (9Z,12Z)-octadecadienoyl-CoA + 2 NADPH + 2 H(+) = (9Z,12Z)-octadecadien-1-ol + 2 NADP(+) + CoA. It catalyses the reaction eicosanoyl-CoA + 2 NADPH + 2 H(+) = eicosan-1-ol + 2 NADP(+) + CoA. The catalysed reaction is 16-methylheptadecanoyl-CoA + 2 NADPH + 2 H(+) = 16-methylheptadecan-1-ol + 2 NADP(+) + CoA. The enzyme catalyses 18-methylnonadecanoyl-CoA + 2 NADPH + 2 H(+) = 18-methylnonadecan-1-ol + 2 NADP(+) + CoA. Functionally, catalyzes the reduction of saturated and unsaturated C16 or C18 fatty acyl-CoA to fatty alcohols. It plays an essential role in the production of ether lipids/plasmalogens which synthesis requires fatty alcohols. In parallel, it is also required for wax monoesters production since fatty alcohols also constitute a substrate for their synthesis. The sequence is that of Fatty acyl-CoA reductase 1 from Pongo abelii (Sumatran orangutan).